The primary structure comprises 806 residues: Phenylalanine--tRNA ligase beta subunit (806 aa).

The region spanning 40–155 is the tRNA-binding domain; that stretch reads NKGVKGVVVG…SDAEVGADAL (116 aa). Positions 409-484 constitute a B5 domain; the sequence is VQERTVSVTA…RLYGYDHIPV (76 aa). Residues Asp-462, Asp-468, Glu-471, and Glu-472 each contribute to the Mg(2+) site. Positions 712 to 805 constitute an FDX-ACB domain; the sequence is PRFPSMTRDM…VEEKFGAELR (94 aa).

The protein belongs to the phenylalanyl-tRNA synthetase beta subunit family. Type 1 subfamily. In terms of assembly, tetramer of two alpha and two beta subunits. Requires Mg(2+) as cofactor.

It is found in the cytoplasm. It catalyses the reaction tRNA(Phe) + L-phenylalanine + ATP = L-phenylalanyl-tRNA(Phe) + AMP + diphosphate + H(+). This is Phenylalanine--tRNA ligase beta subunit from Bacillus cereus (strain ATCC 14579 / DSM 31 / CCUG 7414 / JCM 2152 / NBRC 15305 / NCIMB 9373 / NCTC 2599 / NRRL B-3711).